We begin with the raw amino-acid sequence, 318 residues long: Phosphatidylglycerol--prolipoprotein diacylglyceryl transferase (318 aa).

7 helical membrane passes run 23–43 (PLTIRFYALCILAGIVIGAWL), 59–79 (MDIIMWAVPFGIVGGRLYHVI), 98–118 (IWEGGLGIWGAVAVGLAGAAI), 124–146 (GVRLATFADAAAPGLLLAQAMGR), 192–212 (FQPTFLYESLWCLAAAALLVF), 219–239 (LGAGSVFALYVVLYTAGRFIF), and 253–273 (LRVNTWVSALLFLAALAVFLI). R146 provides a ligand contact to a 1,2-diacyl-sn-glycero-3-phospho-(1'-sn-glycerol). The span at 293–312 (FDTRANGHDPEKHDETDGKG) shows a compositional bias: basic and acidic residues. The segment at 293-318 (FDTRANGHDPEKHDETDGKGNRHHVP) is disordered.

The protein belongs to the Lgt family.

The protein localises to the cell membrane. It carries out the reaction L-cysteinyl-[prolipoprotein] + a 1,2-diacyl-sn-glycero-3-phospho-(1'-sn-glycerol) = an S-1,2-diacyl-sn-glyceryl-L-cysteinyl-[prolipoprotein] + sn-glycerol 1-phosphate + H(+). Its pathway is protein modification; lipoprotein biosynthesis (diacylglyceryl transfer). In terms of biological role, catalyzes the transfer of the diacylglyceryl group from phosphatidylglycerol to the sulfhydryl group of the N-terminal cysteine of a prolipoprotein, the first step in the formation of mature lipoproteins. In Paenarthrobacter aurescens (strain TC1), this protein is Phosphatidylglycerol--prolipoprotein diacylglyceryl transferase.